A 91-amino-acid chain; its full sequence is MSFLNGLFGRKRDSSAELAKQRLLTVLIDDRYKLTPEMMAQMKADLAEVLKRYLPAIDAEQIEVTLSRGEAHDLLKADVPLRRTSEGPSNR.

Belongs to the MinE family.

Prevents the cell division inhibition by proteins MinC and MinD at internal division sites while permitting inhibition at polar sites. This ensures cell division at the proper site by restricting the formation of a division septum at the midpoint of the long axis of the cell. The chain is Cell division topological specificity factor from Chloroflexus aggregans (strain MD-66 / DSM 9485).